A 228-amino-acid polypeptide reads, in one-letter code: 3,4-dihydroxy-2-butanone 4-phosphate synthase (228 aa).

Residues 37–38 (RE), D42, 150–154 (RRGHT), and E174 contribute to the D-ribulose 5-phosphate site. E38 serves as a coordination point for Mg(2+). Residue H153 coordinates Mg(2+).

This sequence belongs to the DHBP synthase family. In terms of assembly, homodimer. It depends on Mg(2+) as a cofactor. Requires Mn(2+) as cofactor.

The catalysed reaction is D-ribulose 5-phosphate = (2S)-2-hydroxy-3-oxobutyl phosphate + formate + H(+). It functions in the pathway cofactor biosynthesis; riboflavin biosynthesis; 2-hydroxy-3-oxobutyl phosphate from D-ribulose 5-phosphate: step 1/1. In terms of biological role, catalyzes the conversion of D-ribulose 5-phosphate to formate and 3,4-dihydroxy-2-butanone 4-phosphate. The sequence is that of 3,4-dihydroxy-2-butanone 4-phosphate synthase from Photobacterium profundum (strain SS9).